Consider the following 165-residue polypeptide: Large ribosomal subunit protein uL10 (165 aa).

It belongs to the universal ribosomal protein uL10 family. In terms of assembly, part of the ribosomal stalk of the 50S ribosomal subunit. The N-terminus interacts with L11 and the large rRNA to form the base of the stalk. The C-terminus forms an elongated spine to which L12 dimers bind in a sequential fashion forming a multimeric L10(L12)X complex.

Forms part of the ribosomal stalk, playing a central role in the interaction of the ribosome with GTP-bound translation factors. This chain is Large ribosomal subunit protein uL10, found in Yersinia pseudotuberculosis serotype IB (strain PB1/+).